The chain runs to 67 residues: ATP synthase F(0) complex subunit 8 (67 aa).

The helical transmembrane segment at 8–24 (TWFTTILSTSFSIIHRL) threads the bilayer. Residue K54 is modified to N6-acetyllysine; alternate. K54 bears the N6-succinyllysine; alternate mark. Residue K57 is modified to N6-acetyllysine.

Belongs to the ATPase protein 8 family. In terms of assembly, component of the ATP synthase complex composed at least of ATP5F1A/subunit alpha, ATP5F1B/subunit beta, ATP5MC1/subunit c (homooctomer), MT-ATP6/subunit a, MT-ATP8/subunit 8, ATP5ME/subunit e, ATP5MF/subunit f, ATP5MG/subunit g, ATP5MK/subunit k, ATP5MJ/subunit j, ATP5F1C/subunit gamma, ATP5F1D/subunit delta, ATP5F1E/subunit epsilon, ATP5PF/subunit F6, ATP5PB/subunit b, ATP5PD/subunit d, ATP5PO/subunit OSCP. ATP synthase complex consists of a soluble F(1) head domain (subunits alpha(3) and beta(3)) - the catalytic core - and a membrane F(0) domain - the membrane proton channel (subunits c, a, 8, e, f, g, k and j). These two domains are linked by a central stalk (subunits gamma, delta, and epsilon) rotating inside the F1 region and a stationary peripheral stalk (subunits F6, b, d, and OSCP). Interacts with PRICKLE3.

The protein resides in the mitochondrion membrane. Subunit 8, of the mitochondrial membrane ATP synthase complex (F(1)F(0) ATP synthase or Complex V) that produces ATP from ADP in the presence of a proton gradient across the membrane which is generated by electron transport complexes of the respiratory chain. ATP synthase complex consist of a soluble F(1) head domain - the catalytic core - and a membrane F(1) domain - the membrane proton channel. These two domains are linked by a central stalk rotating inside the F(1) region and a stationary peripheral stalk. During catalysis, ATP synthesis in the catalytic domain of F(1) is coupled via a rotary mechanism of the central stalk subunits to proton translocation. In vivo, can only synthesize ATP although its ATP hydrolase activity can be activated artificially in vitro. Part of the complex F(0) domain. The polypeptide is ATP synthase F(0) complex subunit 8 (Glis glis (Fat dormouse)).